The primary structure comprises 852 residues: Genome polyprotein (852 aa).

2 consecutive short sequence motifs ((L)YPX(n)L motif) follow at residues 167–171 and 200–205; these read YPHGL and YPVWEL. An involved in P1-2A pentamerization region spans residues 766–836; the sequence is MMSRIAAGDL…PRKMKGLFSQ (71 aa).

Belongs to the picornaviridae polyprotein family. Homodimer. Homomultimer; probably interacts with membranes in a multimeric form. Seems to assemble into amyloid-like fibers. In terms of assembly, homopentamer. Homooligomer. As to quaternary structure, interacts with capsid protein VP2. Interacts with capsid protein VP3. Interacts with capsid protein VP1. Interacts with capsid protein VP3. In terms of assembly, interacts with capsid protein VP1. Interacts with capsid protein VP2. Post-translationally, specific enzymatic cleavages by viral protease in vivo yield a variety of precursors and mature proteins. Polyprotein processing intermediates are produced, such as P1-2A which is a functional precursor of the structural proteins, VP0 which is a VP4-VP2 precursor, VP1-2A precursor, 3ABC precursor which is a stable and catalytically active precursor of 3A, 3B and 3C proteins, 3AB and 3CD precursors. The assembly signal 2A is removed from VP1-2A by a host protease, possibly host Cathepsin L. This cleavage occurs over a region of 3 amino-acids probably generating VP1 proteins with heterogeneous C-termini. In terms of processing, during virion maturation, immature virions are rendered infectious following cleavage of VP0 into VP4 and VP2. This maturation seems to be an autocatalytic event triggered by the presence of RNA in the capsid and is followed by a conformational change of the particle. The assembly signal 2A is removed from VP1-2A by a host protease, possibly host Cathepsin L in naked virions. This cleavage does not occur in enveloped virions. This cleavage occurs over a region of 3 amino-acids probably generating VP1 proteins with heterogeneous C-termini. Post-translationally, viral protein genome-linked: VPg is uridylylated prior to priming replication into VPg-pUpU. In terms of processing, unlike other picornaviruses, does not seem to be myristoylated.

The protein localises to the virion. The protein resides in the host endosome. It is found in the host multivesicular body. Its subcellular location is the host membrane. Its function is as follows. Capsid proteins VP1, VP2, and VP3 form a closed capsid enclosing the viral positive strand RNA genome. All these proteins contain a beta-sheet structure called beta-barrel jelly roll. Together they form an icosahedral capsid (T=3) composed of 60 copies of each VP1, VP2, and VP3, with a diameter of approximately 300 Angstroms. VP1 is situated at the 12 fivefold axes, whereas VP2 and VP3 are located at the quasi-sixfold axes. The naked capsid interacts with the host receptor HAVCR1 to provide virion attachment to and probably entry into the target cell. In terms of biological role, VP0 precursor is a component of the immature procapsids. Plays a role in the assembly of the 12 pentamers into an icosahedral structure. Has not been detected in mature virions, supposedly owing to its small size. Functionally, precursor component of immature procapsids that corresponds to an extended form of the structural protein VP1. After maturation, possibly by the host Cathepsin L, the assembly signal 2A is cleaved to give rise to the mature VP1 protein. Its function is as follows. Affects membrane integrity and causes an increase in membrane permeability. In terms of biological role, functions as a viroporin. Affects membrane integrity and causes an increase in membrane permeability. Involved in host intracellular membrane rearrangements probably to give rise to the viral factories. Does not disrupt calcium homeostasis or glycoprotein trafficking. Antagonizes the innate immune response of the host by suppressing IFN-beta synthesis, which it achieves by interfering with the RIG-I/IFIH1 pathway. This chain is Genome polyprotein, found in Cercopithecus hamlyni (Owl-faced monkey).